The primary structure comprises 1710 residues: Phosphatidylinositol 4-phosphate 5-kinase (1710 aa).

The region spanning 68–98 (YKSIFKAFDLNNDNYLDFYEFCVAINIMLKG) is the EF-hand domain. Ca(2+) is bound by residues aspartate 76, asparagine 78, aspartate 80, tyrosine 82, and glutamate 87. Disordered regions lie at residues 139–255 (NNMN…DPIN), 427–479 (KQKK…IKSV), and 895–993 (GEGH…HNNN). A compositionally biased stretch (low complexity) spans 140 to 235 (NMNGDNINGD…HNNNSHNNNN (96 aa)). Residues 236–248 (KAENSLGQPLNEK) are compositionally biased toward polar residues. Basic residues predominate over residues 427-444 (KQKKKKKKKKKKKKKKEK). Over residues 456–468 (SSSMENKSQNKSQ) the composition is skewed to low complexity. A compositionally biased stretch (acidic residues) spans 902-973 (EEEEKNDDEE…DDNDDNDDND (72 aa)). The span at 974-987 (EKSNIKIENKKDVP) shows a compositional bias: basic and acidic residues. Residues 1334-1709 (QKKTFHRILA…RFVTFIENHM (376 aa)) enclose the PIPK domain.

It catalyses the reaction a 1,2-diacyl-sn-glycero-3-phospho-(1D-myo-inositol 4-phosphate) + ATP = a 1,2-diacyl-sn-glycero-3-phospho-(1D-myo-inositol-4,5-bisphosphate) + ADP + H(+). Catalytic activity is increase by myristoylated ARF1. Phosphatidic acid has no effect on catalytic activity. In terms of biological role, catalyzes the phosphorylation of phosphatidylinositol 4-phosphate (PtdIns(4)P/PI4P) to form phosphatidylinositol 4,5-bisphosphate (PtdIns(4,5)P2/PIP2), a lipid second messenger that regulates several cellular processes. The polypeptide is Phosphatidylinositol 4-phosphate 5-kinase (Plasmodium falciparum (isolate 3D7)).